The sequence spans 1237 residues: Mediator of RNA polymerase II transcription subunit 5 (1237 aa).

2 disordered regions span residues 1109–1131 (DDEP…TSNA) and 1202–1226 (HGAQ…ADSG). Residues 1119 to 1131 (HAAANATSHTSNA) show a composition bias toward low complexity.

This sequence belongs to the Mediator complex subunit 5 family. In terms of assembly, component of the Mediator complex.

It localises to the nucleus. In terms of biological role, component of the Mediator complex, a coactivator involved in the regulated transcription of nearly all RNA polymerase II-dependent genes. Mediator functions as a bridge to convey information from gene-specific regulatory proteins to the basal RNA polymerase II transcription machinery. Mediator is recruited to promoters by direct interactions with regulatory proteins and serves as a scaffold for the assembly of a functional preinitiation complex with RNA polymerase II and the general transcription factors. The protein is Mediator of RNA polymerase II transcription subunit 5 (NUT1) of Mycosarcoma maydis (Corn smut fungus).